The following is a 435-amino-acid chain: Tol-Pal system protein TolB (435 aa).

The first 28 residues, 1–28 (MVKCSLIRALMVIAGLIGAAAFTTPANA), serve as a signal peptide directing secretion. Positions 288–310 (STAAIDTSPSYSPDGARVSFESD) are disordered.

This sequence belongs to the TolB family. The Tol-Pal system is composed of five core proteins: the inner membrane proteins TolA, TolQ and TolR, the periplasmic protein TolB and the outer membrane protein Pal. They form a network linking the inner and outer membranes and the peptidoglycan layer.

It is found in the periplasm. Functionally, part of the Tol-Pal system, which plays a role in outer membrane invagination during cell division and is important for maintaining outer membrane integrity. This is Tol-Pal system protein TolB from Rhizobium leguminosarum bv. trifolii (strain WSM2304).